We begin with the raw amino-acid sequence, 353 residues long: CCN family member 3 (353 aa).

An N-terminal signal peptide occupies residues 1 to 26 (MEPGGGHSLPVLLLLLLLLLLRPSEV). The IGFBP N-terminal domain occupies 29–103 (REAPCPRPCG…GGGTGICMVL (75 aa)). Cystine bridges form between C33-C59, C37-C61, C41-C62, C48-C65, C73-C87, and C79-C100. Residues 106-172 (DNCVFDGMIY…GECCEKWVCE (67 aa)) form the VWFC domain. In terms of domain architecture, TSP type-1 spans 203 to 248 (NCIEQTTEWSACSRSCGMGFSTRVTNRNQQCEMVKQTRLCMMRPCE). 5 cysteine pairs are disulfide-bonded: C260–C297, C277–C311, C288–C327, C291–C329, and C296–C333. Residues 260-334 (CIRTKKSMKA…NTCVCHGNCP (75 aa)) enclose the CTCK domain. The N-linked (GlcNAc...) asparagine glycan is linked to N276.

It belongs to the CCN family.

The protein resides in the secreted. The protein localises to the cytoplasm. It localises to the cell junction. Its subcellular location is the gap junction. In terms of biological role, immediate-early protein likely to play a role in cell growth regulation. The sequence is that of CCN family member 3 (CCN3) from Coturnix japonica (Japanese quail).